The sequence spans 421 residues: Threonine--tRNA ligase editing subunit (421 aa).

Belongs to the class-II aminoacyl-tRNA synthetase family. Archaea-specific ThrRS editing domain subfamily. Probably interacts with its catalytic subunit.

The protein localises to the cytoplasm. In terms of biological role, freestanding tRNA editing subunit of threonine--tRNA ligase, the catalytic subunit is probably AC Q9YDW0. Deacylates (edits) mischarged L-seryl-tRNA(Thr) in trans; has no activity on correctly charged L-threonyl-tRNA(Thr). Probably does not aminoacylate tRNA(Thr). Deacylates correctly charged glycyl-tRNA(Gly), but not glycyl-tRNA(Gly)(2'-dA76) (the terminal 2'-OH of tRNA adenine 76 has been dehydroxylated) nor the 2'-fluoro tRNA derivative, strongly suggesting the editing function is catalyzed by the 2'-OH of A76 of tRNA(Thr). This chain is Threonine--tRNA ligase editing subunit (thrS2), found in Aeropyrum pernix (strain ATCC 700893 / DSM 11879 / JCM 9820 / NBRC 100138 / K1).